Consider the following 187-residue polypeptide: GTP cyclohydrolase 1 (187 aa).

Residues C76, H79, and C148 each coordinate Zn(2+).

It belongs to the GTP cyclohydrolase I family. Toroid-shaped homodecamer, composed of two pentamers of five dimers.

The enzyme catalyses GTP + H2O = 7,8-dihydroneopterin 3'-triphosphate + formate + H(+). It participates in cofactor biosynthesis; 7,8-dihydroneopterin triphosphate biosynthesis; 7,8-dihydroneopterin triphosphate from GTP: step 1/1. This chain is GTP cyclohydrolase 1, found in Streptococcus agalactiae serotype V (strain ATCC BAA-611 / 2603 V/R).